Reading from the N-terminus, the 278-residue chain is Undecaprenyl-diphosphatase 1 (278 aa).

Helical transmembrane passes span 85-105, 108-128, 188-208, 218-238, and 254-274; these read LNVI…EKTI, ALFS…VILW, VATE…TAYE, VDAL…AFAC, and FAWY…SGAL.

It belongs to the UppP family.

It localises to the cell inner membrane. The enzyme catalyses di-trans,octa-cis-undecaprenyl diphosphate + H2O = di-trans,octa-cis-undecaprenyl phosphate + phosphate + H(+). Functionally, catalyzes the dephosphorylation of undecaprenyl diphosphate (UPP). Confers resistance to bacitracin. The sequence is that of Undecaprenyl-diphosphatase 1 from Paraburkholderia xenovorans (strain LB400).